We begin with the raw amino-acid sequence, 419 residues long: Elongation factor Tu, chloroplastic (419 aa).

In terms of domain architecture, tr-type G spans 10–214; it reads KPHVNIGTIG…TVDEHIPTPK (205 aa). Residues 19 to 26 form a G1 region; it reads GHVDHGKT. Residue 19 to 26 coordinates GTP; the sequence is GHVDHGKT. A Mg(2+)-binding site is contributed by T26. Residues 60-64 are G2; that stretch reads GITIN. The segment at 81–84 is G3; sequence DCPG. GTP is bound by residues 81 to 85 and 136 to 139; these read DCPGH and NKAD. The tract at residues 136–139 is G4; that stretch reads NKAD. The segment at 174-176 is G5; the sequence is SAL.

It belongs to the TRAFAC class translation factor GTPase superfamily. Classic translation factor GTPase family. EF-Tu/EF-1A subfamily.

It is found in the plastid. It localises to the chloroplast. The enzyme catalyses GTP + H2O = GDP + phosphate + H(+). Its function is as follows. GTP hydrolase that promotes the GTP-dependent binding of aminoacyl-tRNA to the A-site of ribosomes during protein biosynthesis. In Stigeoclonium helveticum (Green alga), this protein is Elongation factor Tu, chloroplastic (tufA).